A 108-amino-acid chain; its full sequence is Small ribosomal subunit protein uS10 (108 aa).

This sequence belongs to the universal ribosomal protein uS10 family. In terms of assembly, part of the 30S ribosomal subunit.

Functionally, involved in the binding of tRNA to the ribosomes. This chain is Small ribosomal subunit protein uS10, found in Mycoplasma pneumoniae (strain ATCC 29342 / M129 / Subtype 1) (Mycoplasmoides pneumoniae).